The primary structure comprises 352 residues: Type II restriction enzyme HaeII (352 aa).

It catalyses the reaction Endonucleolytic cleavage of DNA to give specific double-stranded fragments with terminal 5'-phosphates.. In terms of biological role, a P subtype restriction enzyme that recognizes the double-stranded sequence 5'-RGCGCY-3' and cleaves after C-5. This is Type II restriction enzyme HaeII (haeIIR) from Haemophilus aegyptius.